The sequence spans 444 residues: 3-isopropylmalate dehydratase large subunit (444 aa).

Positions 348, 408, and 411 each coordinate [4Fe-4S] cluster. A disordered region spans residues 423 to 444; the sequence is ERXXSHSNRNFEGRQGRGGRTH.

This sequence belongs to the aconitase/IPM isomerase family. LeuC type 1 subfamily. Heterodimer of LeuC and LeuD. Requires [4Fe-4S] cluster as cofactor.

The catalysed reaction is (2R,3S)-3-isopropylmalate = (2S)-2-isopropylmalate. Its pathway is amino-acid biosynthesis; L-leucine biosynthesis; L-leucine from 3-methyl-2-oxobutanoate: step 2/4. Its function is as follows. Catalyzes the isomerization between 2-isopropylmalate and 3-isopropylmalate, via the formation of 2-isopropylmaleate. The polypeptide is 3-isopropylmalate dehydratase large subunit (Buchnera aphidicola subsp. Uroleucon rudbeckiae).